Consider the following 158-residue polypeptide: Transcription factor BTF3 homolog 4 (158 aa).

K5 is modified (N6-methyllysine). The region spanning 33–98 (TADDKKLQSS…AEAKPITEML (66 aa)) is the NAC-A/B domain. T111 carries the post-translational modification Phosphothreonine. The interval 123 to 158 (QVLDSKTPKPEDIDEEEDDVPDLVENFDEASKNEAN) is disordered. The segment covering 134-150 (DIDEEEDDVPDLVENFD) has biased composition (acidic residues).

It belongs to the NAC-beta family.

The sequence is that of Transcription factor BTF3 homolog 4 (BTF3L4) from Bos taurus (Bovine).